Here is an 877-residue protein sequence, read N- to C-terminus: MDKKKLLLIDGSSVAFRAFFALYQQLDRFKNVAGLHTNAIYGFQLMLSHLLERVEPSHILVAFDAGKTTFRTEMYADYKGGRAKTPDEFREQFPFIRELLDHMGIRHYDLAQYEADDIIGTLDKLAEQDGFDITIVSGDKDLIQLTDEHTVVEISKKGVAEFEAFTPDYLMEEMGLTPAQFIDLKALMGDKSDNIPGVTKVGEKTGIKLLLEHGSLEGIYENIDGMKTSKMKENLINDKEQAFLSKTLATIDTKAPIAIGLEDLVYSGPDVENLGKFYDEMGFKQLKQALNVSSADVSESLDFTIVDQISQDMLSEESIFHFELFGENYHTDNLVGFVWSCGDKLYATDKLELLQDPIFKDFLEKTSLRVYDFKKVKVLLQRFGVDLQAPAFDIRLAKYLLSTVEDNEIATIASLYGQTYLVDDETFYGKGVKKAIPEREKFLEHLACKLAVLVETEPILLEKLSENGQLELLYDMEQPLAFVLAKMEIAGIMVKKETLLEMQAENELVIEKLTQEIYELAGEEFNVNSPKQLGVLLFEKLGLPLEYTKKTKTGYSTAVDVLERLAPIAPIVKKILDYRQIAKIQSTYVIGLQDWILADGKIHTRYVQDLTQTGRLSSVDPNLQNIPARLEQGRLIRKAFVPEWEDSVLLSSDYSQIELRVLAHISKDEHLIKAFQEGADIHTSTAMRVFGIERPDDVTANDRRNAKAVNFGVVYGISDFGLSNNLGISRKEAKAYIDTYFERFPGIKNYMDEVVREARDKGYVETLFKRRRELPDINSRNFNIRGFAERTAINSPIQGSAADILKIAMIQLDKALVAGGYQTKMLLQVHDEIVLEVPKSELVEMKKLVKQTMEEAIQLSVPLIADENEGATWYEAK.

The 94-residue stretch at 177–270 (TPAQFIDLKA…LEDLVYSGPD (94 aa)) folds into the 5'-3' exonuclease domain. The region spanning 302-465 (DFTIVDQISQ…TEPILLEKLS (164 aa)) is the 3'-5' exonuclease domain.

The protein belongs to the DNA polymerase type-A family. Single-chain monomer with multiple functions.

The catalysed reaction is DNA(n) + a 2'-deoxyribonucleoside 5'-triphosphate = DNA(n+1) + diphosphate. In terms of biological role, in addition to polymerase activity, this DNA polymerase exhibits 3'-5' and 5'-3' exonuclease activity. The protein is DNA polymerase I (polA) of Streptococcus pneumoniae serotype 4 (strain ATCC BAA-334 / TIGR4).